Reading from the N-terminus, the 128-residue chain is Large ribosomal subunit protein bL20 (128 aa).

The protein belongs to the bacterial ribosomal protein bL20 family.

Binds directly to 23S ribosomal RNA and is necessary for the in vitro assembly process of the 50S ribosomal subunit. It is not involved in the protein synthesizing functions of that subunit. This Micrococcus luteus (strain ATCC 4698 / DSM 20030 / JCM 1464 / CCM 169 / CCUG 5858 / IAM 1056 / NBRC 3333 / NCIMB 9278 / NCTC 2665 / VKM Ac-2230) (Micrococcus lysodeikticus) protein is Large ribosomal subunit protein bL20.